A 148-amino-acid polypeptide reads, in one-letter code: Large ribosomal subunit protein uL15 (148 aa).

Positions 12–52 are disordered; it reads ERKNRKRVGRGGGSGWGGTSGKGHKGQNARSGGGVPAWFEG. Residues 21-32 show a composition bias toward gly residues; the sequence is RGGGSGWGGTSG.

Belongs to the universal ribosomal protein uL15 family. Part of the 50S ribosomal subunit.

In terms of biological role, binds to the 23S rRNA. This chain is Large ribosomal subunit protein uL15, found in Maridesulfovibrio salexigens (strain ATCC 14822 / DSM 2638 / NCIMB 8403 / VKM B-1763) (Desulfovibrio salexigens).